Consider the following 199-residue polypeptide: Prolactin-1 (199 aa).

3 cysteine pairs are disulfide-bonded: C4–C11, C58–C174, and C191–C199. N-linked (GlcNAc...) asparagine glycosylation is present at N60.

The protein belongs to the somatotropin/prolactin family. Glycosylated.

Its subcellular location is the secreted. This chain is Prolactin-1, found in Crocodylus novaeguineae (Crocodile).